The chain runs to 276 residues: NADPH-dependent 7-cyano-7-deazaguanine reductase (276 aa).

80–82 (VES) provides a ligand contact to substrate. 82–83 (SK) provides a ligand contact to NADPH. Cys183 acts as the Thioimide intermediate in catalysis. Asp190 serves as the catalytic Proton donor. Residue 222–223 (HE) participates in substrate binding. 251–252 (RG) provides a ligand contact to NADPH.

This sequence belongs to the GTP cyclohydrolase I family. QueF type 2 subfamily. Homodimer.

Its subcellular location is the cytoplasm. The enzyme catalyses 7-aminomethyl-7-carbaguanine + 2 NADP(+) = 7-cyano-7-deazaguanine + 2 NADPH + 3 H(+). It participates in tRNA modification; tRNA-queuosine biosynthesis. Catalyzes the NADPH-dependent reduction of 7-cyano-7-deazaguanine (preQ0) to 7-aminomethyl-7-deazaguanine (preQ1). In Burkholderia cenocepacia (strain HI2424), this protein is NADPH-dependent 7-cyano-7-deazaguanine reductase.